Consider the following 321-residue polypeptide: ATP-dependent 6-phosphofructokinase (321 aa).

Gly-11 contacts ATP. An ADP-binding site is contributed by 21–25; that stretch reads RAVVR. ATP contacts are provided by residues 72 to 73 and 102 to 105; these read RC and GDGS. Asp-103 lines the Mg(2+) pocket. Residue 126 to 128 coordinates substrate; sequence TID. Asp-128 acts as the Proton acceptor in catalysis. An ADP-binding site is contributed by Arg-155. Substrate contacts are provided by residues Arg-163 and 170–172; that span reads MGR. ADP-binding positions include 186–188, Arg-212, and 214–216; these read GAE and KLH. Substrate-binding positions include Glu-223, Arg-245, and 251–254; that span reads HIQR.

It belongs to the phosphofructokinase type A (PFKA) family. ATP-dependent PFK group I subfamily. Prokaryotic clade 'B1' sub-subfamily. Homotetramer. It depends on Mg(2+) as a cofactor.

Its subcellular location is the cytoplasm. The catalysed reaction is beta-D-fructose 6-phosphate + ATP = beta-D-fructose 1,6-bisphosphate + ADP + H(+). The protein operates within carbohydrate degradation; glycolysis; D-glyceraldehyde 3-phosphate and glycerone phosphate from D-glucose: step 3/4. Its activity is regulated as follows. Allosterically activated by ADP and other diphosphonucleosides, and allosterically inhibited by phosphoenolpyruvate. Functionally, catalyzes the phosphorylation of D-fructose 6-phosphate to fructose 1,6-bisphosphate by ATP, the first committing step of glycolysis. This chain is ATP-dependent 6-phosphofructokinase, found in Thermoanaerobacter pseudethanolicus (strain ATCC 33223 / 39E) (Clostridium thermohydrosulfuricum).